Here is a 459-residue protein sequence, read N- to C-terminus: Putrescine aminotransferase (459 aa).

Pyridoxal 5'-phosphate-binding positions include 150–151 and Q274; that span reads GT. K300 is subject to N6-(pyridoxal phosphate)lysine. T332 serves as a coordination point for pyridoxal 5'-phosphate.

Belongs to the class-III pyridoxal-phosphate-dependent aminotransferase family. Putrescine aminotransferase subfamily. Requires pyridoxal 5'-phosphate as cofactor.

It carries out the reaction an alkane-alpha,omega-diamine + 2-oxoglutarate = an omega-aminoaldehyde + L-glutamate. The catalysed reaction is putrescine + 2-oxoglutarate = 1-pyrroline + L-glutamate + H2O. It catalyses the reaction cadaverine + 2-oxoglutarate = 5-aminopentanal + L-glutamate. Its pathway is amine and polyamine degradation; putrescine degradation; 4-aminobutanal from putrescine (transaminase route): step 1/1. Catalyzes the aminotransferase reaction from putrescine to 2-oxoglutarate, leading to glutamate and 4-aminobutanal, which spontaneously cyclizes to form 1-pyrroline. This is the first step in one of two pathways for putrescine degradation, where putrescine is converted into 4-aminobutanoate (gamma-aminobutyrate or GABA) via 4-aminobutanal. Also functions as a cadaverine transaminase in a a L-lysine degradation pathway to succinate that proceeds via cadaverine, glutarate and L-2-hydroxyglutarate. This Salmonella paratyphi B (strain ATCC BAA-1250 / SPB7) protein is Putrescine aminotransferase.